The primary structure comprises 377 residues: Nitric oxide reductase FlRd-NAD(+) reductase (377 aa).

Belongs to the FAD-dependent oxidoreductase family. FAD is required as a cofactor.

Its subcellular location is the cytoplasm. It carries out the reaction 2 reduced [nitric oxide reductase rubredoxin domain] + NAD(+) + H(+) = 2 oxidized [nitric oxide reductase rubredoxin domain] + NADH. Its pathway is nitrogen metabolism; nitric oxide reduction. In terms of biological role, one of at least two accessory proteins for anaerobic nitric oxide (NO) reductase. Reduces the rubredoxin moiety of NO reductase. In Escherichia coli O45:K1 (strain S88 / ExPEC), this protein is Nitric oxide reductase FlRd-NAD(+) reductase.